The primary structure comprises 283 residues: Thymidylate synthase (283 aa).

Residue R22 coordinates dUMP. Catalysis depends on C160, which acts as the Nucleophile. DUMP is bound by residues 180–183 (RSCD), N191, and 221–223 (HIY). D183 provides a ligand contact to (6R)-5,10-methylene-5,6,7,8-tetrahydrofolate. S282 lines the (6R)-5,10-methylene-5,6,7,8-tetrahydrofolate pocket.

It belongs to the thymidylate synthase family. Bacterial-type ThyA subfamily. As to quaternary structure, homodimer.

The protein localises to the cytoplasm. It catalyses the reaction dUMP + (6R)-5,10-methylene-5,6,7,8-tetrahydrofolate = 7,8-dihydrofolate + dTMP. It functions in the pathway pyrimidine metabolism; dTTP biosynthesis. Catalyzes the reductive methylation of 2'-deoxyuridine-5'-monophosphate (dUMP) to 2'-deoxythymidine-5'-monophosphate (dTMP) while utilizing 5,10-methylenetetrahydrofolate (mTHF) as the methyl donor and reductant in the reaction, yielding dihydrofolate (DHF) as a by-product. This enzymatic reaction provides an intracellular de novo source of dTMP, an essential precursor for DNA biosynthesis. The sequence is that of Thymidylate synthase from Haemophilus influenzae (strain PittEE).